Here is a 499-residue protein sequence, read N- to C-terminus: MRRYVAALDQGTTSTRCIVFDHGGRVLGLAQREHEQIFPRPGWVEHDAETIWRNTELVLAEAMRTLELSAADIAAVGITNQRETTLVWERATGKPIHHAIVWQDTRTDRLVGELGGAQGPTRYQDRTGLPLSTYFAGPKLRWILDHVPDARERAEAGELCFGTMDSWLLWNLTGAHITDVTNASRTMLMDLRTQRWDEDICADFGVPPAMLPEIRSSSEVYGEITAGPLAGVAVAGILGDQQAATFGQACLSPGEAKNTYGTGNFMLLNTGTTPVFSKHGLLTTVCYRLDDQPAVYALEGSIAVTGSLVQWLRDNLGLISSADEIEPLARSVDDNGGAYIVPAFSGLFAPRWRPDARGVIAGLTRFVTKAHLARAVLESTAFQTREVVDAMRADAESQQLDLELTTLKVDGGMTANDLLMQFQSDILDVPVVRPVVAETTALGAAYAAGLAVGYWSGTDDIRANWAADTTWRPTMSDQDRATHLAAWNKAVERTYNWTA.

Thr-12 contacts ADP. ATP-binding residues include Thr-12, Thr-13, and Ser-14. Thr-12 contacts sn-glycerol 3-phosphate. Arg-16 serves as a coordination point for ADP. Sn-glycerol 3-phosphate is bound by residues Arg-82, Glu-83, Tyr-134, and Asp-240. Arg-82, Glu-83, Tyr-134, Asp-240, and Gln-241 together coordinate glycerol. 2 residues coordinate ADP: Thr-262 and Gly-306. Residues Thr-262, Gly-306, Gln-310, and Gly-412 each contribute to the ATP site. Residues Gly-412 and Asn-416 each contribute to the ADP site.

Belongs to the FGGY kinase family.

The catalysed reaction is glycerol + ATP = sn-glycerol 3-phosphate + ADP + H(+). It functions in the pathway polyol metabolism; glycerol degradation via glycerol kinase pathway; sn-glycerol 3-phosphate from glycerol: step 1/1. Its activity is regulated as follows. Inhibited by fructose 1,6-bisphosphate (FBP). In terms of biological role, key enzyme in the regulation of glycerol uptake and metabolism. Catalyzes the phosphorylation of glycerol to yield sn-glycerol 3-phosphate. This is Glycerol kinase from Nocardia farcinica (strain IFM 10152).